The primary structure comprises 473 residues: Chromosomal replication initiator protein DnaA (473 aa).

A domain I, interacts with DnaA modulators region spans residues 1 to 73; sequence MTNIEQDRWS…LSCWQAEMPQ (73 aa). The tract at residues 73–129 is domain II; it reads QVHRVDLTVRTAMRCAAPAKDAPAHAEPRRDDGRPAPELRATAIAPVSATHEALGGS. Positions 130-352 are domain III, AAA+ region; sequence PLDPRLTFGS…GAINRLLAHS (223 aa). Residues Gly-177, Gly-179, Lys-180, and Thr-181 each coordinate ATP. Residues 353–473 form a domain IV, binds dsDNA region; that stretch reads KLNAQPVTLE…VELLKRQLQE (121 aa).

This sequence belongs to the DnaA family. As to quaternary structure, oligomerizes as a right-handed, spiral filament on DNA at oriC.

The protein resides in the cytoplasm. Its function is as follows. Plays an essential role in the initiation and regulation of chromosomal replication. ATP-DnaA binds to the origin of replication (oriC) to initiate formation of the DNA replication initiation complex once per cell cycle. Binds the DnaA box (a 9 base pair repeat at the origin) and separates the double-stranded (ds)DNA. Forms a right-handed helical filament on oriC DNA; dsDNA binds to the exterior of the filament while single-stranded (ss)DNA is stabiized in the filament's interior. The ATP-DnaA-oriC complex binds and stabilizes one strand of the AT-rich DNA unwinding element (DUE), permitting loading of DNA polymerase. After initiation quickly degrades to an ADP-DnaA complex that is not apt for DNA replication. Binds acidic phospholipids. This chain is Chromosomal replication initiator protein DnaA, found in Rhodopseudomonas palustris (strain BisB18).